A 48-amino-acid chain; its full sequence is Large ribosomal subunit protein eL40 (48 aa).

Belongs to the eukaryotic ribosomal protein eL40 family.

The protein is Large ribosomal subunit protein eL40 of Methanosphaera stadtmanae (strain ATCC 43021 / DSM 3091 / JCM 11832 / MCB-3).